The primary structure comprises 517 residues: MTENTSAEGPQTLRELQIANRQLGARNAKLVELLQASRTKLEEINGRLEALAEPPSTYGTLLQANRDFTAEVFTAGRRMRLMVSPHVPQHELVPGAMVRLGEGQQVVEVTGQPDFGDIAQVVEVSGDRLIIADKVGEEYVVKAAGDLAKEVVTGDSVIVDRKSGWAFEAVPRAETNNLILEEVPDVTYDDIGGLGQQITQIRDAVELPFLHPEIYTRYGLRPPKGVLLYGPPGNGKTLIAKAVANSLAQSDSPYFLNIKGPELLNKFVGETERQIRAIFEQARRVASSGRPVIVFFDEMEALFRTRGTGVSSDMESTVVPQLLAELDGVEAAGNVIVIGASNREELIDPAILRPGRLDVKIRIARPDAFGAAAILSKHLDASLPIDADFSAATGSNEAAAAALRQSIVDELFTRDEEHRYVTLHYADGSREDLYWADFVSGAMLANIVDRAKTLAIKDALHNGANGTDGLRPEHVNAAVLAEVGDSEDLPDTTNPAEWARIYGHGTKRVVDIDVHKV.

Residues 25–53 (ARNAKLVELLQASRTKLEEINGRLEALAE) are a coiled coil. Residue 233-238 (GNGKTL) coordinates ATP.

Belongs to the AAA ATPase family. Homohexamer. Assembles into a hexameric ring structure.

The sequence is that of AAA ATPase forming ring-shaped complexes from Corynebacterium jeikeium (strain K411).